The sequence spans 273 residues: Tryptase (273 aa).

Positions 1 to 18 (MLKLLLLTLPLLSSLVHA) are cleaved as a signal peptide. Positions 19-28 (APSLAMPREG) are cleaved as a propeptide — activation peptide. The region spanning 29-270 (IVGGQEASGN…YLDWIYRYVP (242 aa)) is the Peptidase S1 domain. A glycan (N-linked (GlcNAc...) asparagine) is linked at Asn49. Cys57 and Cys73 are oxidised to a cystine. Active-site charge relay system residues include His72 and Asp119. 3 cysteine pairs are disulfide-bonded: Cys153-Cys228, Cys186-Cys209, and Cys218-Cys246. Ser222 serves as the catalytic Charge relay system.

Belongs to the peptidase S1 family. Tryptase subfamily. In terms of assembly, homotetramer. Glycosylated. As to expression, mast cells.

It is found in the secreted. The catalysed reaction is Preferential cleavage: Arg-|-Xaa, Lys-|-Xaa, but with more restricted specificity than trypsin.. In terms of biological role, tryptase is the major neutral protease present in mast cells and is secreted upon the coupled activation-degranulation response of this cell type. May play a role in innate immunity. This is Tryptase (Tpsab1) from Rattus norvegicus (Rat).